Reading from the N-terminus, the 124-residue chain is Fluoride-specific ion channel FluC (124 aa).

4 helical membrane passes run 4–24 (IFYI…TTLV), 35–55 (YATF…FGYL), 63–83 (PYLK…FSAF), and 96–116 (ILIA…ATWT). Na(+)-binding residues include G75 and T78.

The protein belongs to the fluoride channel Fluc/FEX (TC 1.A.43) family.

Its subcellular location is the cell inner membrane. It catalyses the reaction fluoride(in) = fluoride(out). With respect to regulation, na(+) is not transported, but it plays an essential structural role and its presence is essential for fluoride channel function. Its function is as follows. Fluoride-specific ion channel. Important for reducing fluoride concentration in the cell, thus reducing its toxicity. The sequence is that of Fluoride-specific ion channel FluC from Flavobacterium psychrophilum (strain ATCC 49511 / DSM 21280 / CIP 103535 / JIP02/86).